We begin with the raw amino-acid sequence, 183 residues long: Ribosome rescue factor SmrB (183 aa).

A Smr domain is found at L98 to E173.

This sequence belongs to the SmrB family. In terms of assembly, associates with collided ribosomes, but not with correctly translating polysomes.

Functionally, acts as a ribosome collision sensor. Detects stalled/collided disomes (pairs of ribosomes where the leading ribosome is stalled and a second ribosome has collided with it) and endonucleolytically cleaves mRNA at the 5' boundary of the stalled ribosome. Stalled/collided disomes form a new interface (primarily via the 30S subunits) that binds SmrB. Cleaved mRNA becomes available for tmRNA ligation, leading to ribosomal subunit dissociation and rescue of stalled ribosomes. This is Ribosome rescue factor SmrB from Enterobacter sp. (strain 638).